A 336-amino-acid chain; its full sequence is Phytochrome A-associated F-box protein (336 aa).

Residues 3-55 (ESVFSCIPEDVVFNIFFKLQDDPRNWARLACVCTKFSSIVRNVCCKTQCYSAI) enclose the F-box domain. Positions 197 to 201 (RKRRK) match the Nuclear localization signal motif.

As to quaternary structure, probable component of an E3 ubiquitin ligase SCF complex. Interacts with SKP1A/ASK1 and SKP1B/ASK2.

The protein resides in the nucleus. The protein operates within protein modification; protein ubiquitination. Its function is as follows. Component of SCF(ASK-cullin-F-box) E3 ubiquitin ligase complexes, which may mediate the ubiquitination and subsequent proteasomal degradation of target proteins. Negative regulator of the phyA signaling pathway that shifts the responsiveness of the phyA signaling system associated with hypocotyl elongation from red to far-red wavelength. The protein is Phytochrome A-associated F-box protein (EID1) of Arabidopsis thaliana (Mouse-ear cress).